A 494-amino-acid chain; its full sequence is Flagellin A (494 aa).

The protein belongs to the bacterial flagellin family. As to quaternary structure, heteromer of FlaA and FlaB. FlaB is located proximal to the hook while the remainder of the filament is composed of the predominant FlaA.

The protein localises to the secreted. It is found in the bacterial flagellum. Functionally, flagellin is the subunit protein which polymerizes to form the filaments of bacterial flagella. Important for motility and virulence. This chain is Flagellin A (flaA), found in Helicobacter mustelae.